Here is a 200-residue protein sequence, read N- to C-terminus: Mediator of RNA polymerase II transcription subunit 8 (200 aa).

Belongs to the Mediator complex subunit 8 family. Component of the Mediator complex.

The protein localises to the nucleus. In terms of biological role, component of the Mediator complex, a coactivator involved in the regulated transcription of nearly all RNA polymerase II-dependent genes. Mediator functions as a bridge to convey information from gene-specific regulatory proteins to the basal RNA polymerase II transcription machinery. Mediator is recruited to promoters by direct interactions with regulatory proteins and serves as a scaffold for the assembly of a functional preinitiation complex with RNA polymerase II and the general transcription factors. This is Mediator of RNA polymerase II transcription subunit 8 (med8) from Schizosaccharomyces pombe (strain 972 / ATCC 24843) (Fission yeast).